The following is an 848-amino-acid chain: Neprilysin-11 (848 aa).

Over 1 to 74 (MPFGNDPPDY…WWKSRTTMEK (74 aa)) the chain is Cytoplasmic. Residues 75-95 (LLLPVLLLFCLLTAVLLAVII) form a helical; Signal-anchor for type II membrane protein membrane-spanning segment. The Extracellular segment spans residues 96-848 (NTDKRIEAMK…VNPDHKCIVW (753 aa)). Positions 108–161 (HATQTEHAGFGDPTENPTKTAEDPRVPPIVPEAPTSPEPEVTTSTEKPKEPEVC) are disordered. Positions 133–144 (VPPIVPEAPTSP) are enriched in pro residues. In terms of domain architecture, Peptidase M13 spans 160–848 (VCSTPGCVRA…VNPDHKCIVW (689 aa)). Cysteines 161 and 166 form a disulfide. N178, N249, N284, N312, N337, N364, N398, and N438 each carry an N-linked (GlcNAc...) asparagine glycan. Intrachain disulfides connect C184–C833, C192–C793, C247–C509, and C719–C845. Residue H682 participates in Zn(2+) binding. E683 is a catalytic residue. Position 686 (H686) interacts with Zn(2+). N-linked (GlcNAc...) asparagine glycosylation is present at N726. E744 contacts Zn(2+). D748 acts as the Proton donor in catalysis.

It belongs to the peptidase M13 family. Requires Zn(2+) as cofactor.

The protein resides in the cell membrane. In terms of biological role, probable cell surface protease. The polypeptide is Neprilysin-11 (nep-11) (Caenorhabditis elegans).